A 235-amino-acid chain; its full sequence is Peroxynitrite isomerase 2 (235 aa).

The GXWXGXG signature appears at 82–88 (GVWRGEG). Heme b-binding residues include Lys198 and His225.

This sequence belongs to the nitrobindin family. As to quaternary structure, homodimer. The cofactor is heme b.

The enzyme catalyses peroxynitrite = nitrate. It functions in the pathway nitrogen metabolism. Its function is as follows. Heme-binding protein able to scavenge peroxynitrite and to protect free L-tyrosine against peroxynitrite-mediated nitration, by acting as a peroxynitrite isomerase that converts peroxynitrite to nitrate. Therefore, this protein likely plays a role in peroxynitrite sensing and in the detoxification of reactive nitrogen and oxygen species (RNS and ROS, respectively). Is able to bind nitric oxide (NO) in vitro, but may act as a sensor of peroxynitrite levels in vivo. The chain is Peroxynitrite isomerase 2 from Mycolicibacterium paratuberculosis (strain ATCC BAA-968 / K-10) (Mycobacterium paratuberculosis).